A 379-amino-acid chain; its full sequence is Glucose-1-phosphate adenylyltransferase (379 aa).

Alpha-D-glucose 1-phosphate-binding positions include Gly164, 179–180 (EK), and Ser190.

This sequence belongs to the bacterial/plant glucose-1-phosphate adenylyltransferase family. In terms of assembly, homotetramer.

It catalyses the reaction alpha-D-glucose 1-phosphate + ATP + H(+) = ADP-alpha-D-glucose + diphosphate. It participates in glycan biosynthesis; glycogen biosynthesis. In terms of biological role, involved in the biosynthesis of ADP-glucose, a building block required for the elongation reactions to produce glycogen. Catalyzes the reaction between ATP and alpha-D-glucose 1-phosphate (G1P) to produce pyrophosphate and ADP-Glc. The chain is Glucose-1-phosphate adenylyltransferase from Streptococcus uberis (strain ATCC BAA-854 / 0140J).